The following is a 249-amino-acid chain: Putative NAD(+)--arginine ADP-ribosyltransferase Vis (249 aa).

The first 18 residues, 1–18 (MNTRFLLLLCCLSFTTFS), serve as a signal peptide directing secretion. The TR mART core domain maps to 31-223 (EEEVTQLAED…IGVETVKASA (193 aa)). NAD(+) contacts are provided by residues 68-80 (SISG…DYLR), 117-120 (RGTW), and Glu137. Arg117 is a catalytic residue. Active-site residues include Ser142 and Glu191. Glu191 contacts NAD(+).

It belongs to the Arg-specific ADP-ribosyltransferase family.

The protein resides in the secreted. The enzyme catalyses L-arginyl-[protein] + NAD(+) = N(omega)-(ADP-D-ribosyl)-L-arginyl-[protein] + nicotinamide + H(+). Functionally, a probable mono(ADP-ribosyl)transferase, it may ADP-ribosylate Arg in target protein(s). Upon expression in yeast cells causes cell death. The polypeptide is Putative NAD(+)--arginine ADP-ribosyltransferase Vis (Vibrio splendidus (strain 12B01)).